Here is a 92-residue protein sequence, read N- to C-terminus: MARSVWKGPFVDGYLLKKAETARGSTRAEVIKIWSRRSTILPQFVGLTFGVYNGQKHIPVYVTEEMVGHKFGEFSPTRTFHGHAADKKAKRR.

Belongs to the universal ribosomal protein uS19 family.

Its function is as follows. Protein S19 forms a complex with S13 that binds strongly to the 16S ribosomal RNA. The protein is Small ribosomal subunit protein uS19 of Methylobacterium sp. (strain 4-46).